Consider the following 459-residue polypeptide: FAD-dependent monooxygenase nanF (459 aa).

FAD-binding residues include glutamate 49, glycine 62, and arginine 121. Residues arginine 200 and tyrosine 230 contribute to the active site. The FAD site is built by aspartate 327 and glycine 340.

The protein belongs to the paxM FAD-dependent monooxygenase family. FAD is required as a cofactor.

Its pathway is secondary metabolite biosynthesis. FAD-dependent monooxygenase; part of the gene cluster that mediates the biosynthesis of the benzazepine alkaloid nanangelenin A which contains an unprecedented 3,4-dihydro-1-benzazepine-2,5-dione-N-prenyl-N-acetoxy-anthranilamide scaffold. The first step of nanangelenin biosynthesis is catalyzed by the indoleamine 2,3-dioxygenase nanC which produces N-formyl-kynurenine through the catabolism of tryptophan. The two-module NRPS nanA then utilizes anthranilate (Ant) and L-kynurenine (L-Kyn) to assemble the dipeptide product nanangelenin B. The first adenylation domain of nanA (A1) loads anthranilate onto the T1 domain, while A2 loads kynurenine, generated through spontaneous nonenzymatic deformylation of the nanC-supplied N-formyl-kynurenine. The peptide bond formation between the tethered amino acids is catalyzed by the first condensation domain (C1) between anthranilate's carbonyl carbon and kynurenine's aliphatic primary amine. The second C domain (C2) catalyzes the final cyclization event between the aromatic amine of kynurenine and the tethered carbonyl carbon, yielding nanangelenin B. The terminal T3 domain enhances the catalytic efficiency of C2, suggesting the T2-tethered Ant-L-Kyn is transferred to T3 prior to cyclization by C2. Once released from nanA, nanangelenin B is then prenylated by the prenyltransferase nanD to form nanangelenin C. Nanangelenin C is then N-hydroxylated by the FAD-dependent monooxygenase nanF and further acetylated by the acetyltransferase nanB to yield nanangelenin F. Finally, the N-methyltransferase nanE methylates the amide nitrogen of 1-benzazepine to convert nanangelenin F into nanangelenin A. NanE is also able to methylate most of the intermediates of the pathway such as nanangelenin B and nanangelenin C to produce nanangelenin D and nanangelenin E, respectively. The protein is FAD-dependent monooxygenase nanF of Aspergillus nanangensis.